Consider the following 344-residue polypeptide: Ubiquitin-associated domain-containing protein 2 (344 aa).

The N-terminal stretch at 1 to 34 (MFTSTGSNGLYKAPLSKSLLLVPSAISILLTLLF) is a signal peptide. The Extracellular portion of the chain corresponds to 35-91 (QHYQKFFAYNLQAIKEDFQIWRLVCGRVICLDLKDTFCSSLLIYNFRIFERRYGSRK). A helical transmembrane segment spans residues 92-111 (FSSFLLGAWTLSALFDLLLV). Topologically, residues 112-123 (EAAQYVFGITIN) are cytoplasmic. The helical transmembrane segment at 124–142 (SLPSGFLGPVFALFVPFYC) threads the bilayer. Topologically, residues 143–162 (SIPRVQVTQVLGYFSITNKT) are extracellular. N-linked (GlcNAc...) asparagine glycosylation occurs at asparagine 160. The chain crosses the membrane as a helical span at residues 163–183 (LVYILGLQLLTSGSYIWILAL). Over 184–344 (SGLISGICYN…NVATNFLLQH (161 aa)) the chain is Cytoplasmic. Residues 284-307 (RHNENYQDHHPSDQDTPPPTEVSE) are disordered. A compositionally biased stretch (basic and acidic residues) spans 286–296 (NENYQDHHPSD). A UBA domain is found at 304–344 (EVSEEQVARLMEMGFSRGDALEALRASNNDLNVATNFLLQH).

The protein localises to the endoplasmic reticulum membrane. Its function is as follows. Restricts trafficking of FAF2 from the endoplasmic reticulum to lipid droplets. May negatively regulate the canonical Wnt signaling pathway in the lymphocytes. This Gallus gallus (Chicken) protein is Ubiquitin-associated domain-containing protein 2 (UBAC2).